A 403-amino-acid chain; its full sequence is MAAMPGGPDLAGAGGAVAVAVDAMQVDDPPRASAEEKHGPTIMGGNDPVTGHIISTTIGGKNDEPKRTISYMAERVVGTGSFGVVFQAKCLETGETVAIKKVLQDKRYKNRELQIMRSMDHCNVISLKHCFFSTTSRDELFLNLVMEFVPESLYRVLKHYKDMKQRMPLIYVKLYMYQIFRGLAYIHTVPGVCHRDIKPQNILVDPLTHQVKVCDFGSAKMLIKGEANISYICSRYYRAPELIFGATEYTTSIDIWSAGCVLAELLLGQPLFPGESAVDQLVEIIKVLGTPTREEIRCMNPNYTEFKFPQIKACPWHKIFHKRMPPEAIDLVSRLLQYSPNLRCTALEACAHSFFDELREPHAKLPNGRPFPPLFNFKQELANTHPELVSRLLPEHAQRHSGF.

Residues 71 to 355 enclose the Protein kinase domain; that stretch reads YMAERVVGTG…ALEACAHSFF (285 aa). ATP is bound by residues 77 to 85 and lysine 100; that span reads VGTGSFGVV. Aspartate 196 functions as the Proton acceptor in the catalytic mechanism.

This sequence belongs to the protein kinase superfamily. CMGC Ser/Thr protein kinase family. GSK-3 subfamily. In terms of assembly, interacts with LIC.

It catalyses the reaction L-seryl-[protein] + ATP = O-phospho-L-seryl-[protein] + ADP + H(+). The catalysed reaction is L-threonyl-[protein] + ATP = O-phospho-L-threonyl-[protein] + ADP + H(+). Its function is as follows. Probable serine-threonine kinase that may regulate brassinosteroid signaling. The polypeptide is Shaggy-related protein kinase GSK4 (Oryza sativa subsp. japonica (Rice)).